Reading from the N-terminus, the 383-residue chain is DNA dC-&gt;dU-editing enzyme APOBEC-3G (383 aa).

The essential for cytoplasmic localization stretch occupies residues 1-60 (MKPQFRNTVERMYRDTFFYNFNNRPILSRRNTVWLCYEVKTRGPSMPTWDAKIFRGQVYS). 2 consecutive CMP/dCMP-type deaminase domains span residues 29–138 (RRNT…LRVL) and 214–327 (GQHE…LRTL). Position 32 is a phosphothreonine; by PKA (threonine 32). Histidine 65, cysteine 97, and cysteine 100 together coordinate Zn(2+). The segment at 209 to 335 (KPWVSGQHET…TLHRDGAKIA (127 aa)) is necessary for homooligomerization. An interaction with DNA region spans residues 213–215 (SGQ). Phosphothreonine; by PKA and CAMK2 is present on threonine 218. Histidine 257 contributes to the Zn(2+) binding site. Glutamate 259 (proton donor) is an active-site residue. The Zn(2+) site is built by cysteine 287 and cysteine 290. Positions 312–319 (RIYDDQGR) are interaction with DNA.

It belongs to the cytidine and deoxycytidylate deaminase family. In terms of assembly, homodimer. Zn(2+) serves as cofactor.

It is found in the cytoplasm. It localises to the nucleus. The protein localises to the P-body. It catalyses the reaction a 2'-deoxycytidine in single-stranded DNA + H2O + H(+) = a 2'-deoxyuridine in single-stranded DNA + NH4(+). Its function is as follows. DNA deaminase (cytidine deaminase) which acts as an inhibitor of retrovirus replication and retrotransposon mobility. After the penetration of retroviral nucleocapsids into target cells of infection and the initiation of reverse transcription, it can induce the conversion of cytosine to uracil in the minus-sense single-strand viral DNA, leading to G-to-A hypermutations in the subsequent plus-strand viral DNA. The resultant detrimental levels of mutations in the proviral genome, along with a deamination-independent mechanism that works prior to the proviral integration, together exert efficient antiretroviral effects in infected target cells. Selectively targets single-stranded DNA and does not deaminate double-stranded DNA or single- or double-stranded RNA. The chain is DNA dC-&gt;dU-editing enzyme APOBEC-3G (APOBEC3G) from Papio anubis (Olive baboon).